Consider the following 285-residue polypeptide: Sulfotransferase 2A1 (285 aa).

3'-phosphoadenylyl sulfate is bound by residues lysine 44, serine 45, glycine 46, threonine 47, asparagine 48, and tryptophan 49. The active-site Proton acceptor is the histidine 99. 8 residues coordinate 3'-phosphoadenylyl sulfate: arginine 121, serine 129, tyrosine 184, serine 218, methionine 223, arginine 247, lysine 248, and glycine 249. Position 251 is a phosphoserine (serine 251).

It belongs to the sulfotransferase 1 family. In terms of assembly, homodimer. The N-terminus is blocked. In terms of tissue distribution, liver, adrenal and at lower level in the kidney. Is present in human fetus in higher level in the adrenal than the liver and the kidney.

It localises to the cytoplasm. It carries out the reaction an alcohol + 3'-phosphoadenylyl sulfate = an alkyl sulfate + adenosine 3',5'-bisphosphate + H(+). It catalyses the reaction (24S)-hydroxycholesterol + 3'-phosphoadenylyl sulfate = (24S)-hydroxycholesterol 24-sulfate + adenosine 3',5'-bisphosphate + H(+). The catalysed reaction is (24S)-hydroxycholesterol + 3'-phosphoadenylyl sulfate = (24S)-hydroxycholesterol 3-sulfate + adenosine 3',5'-bisphosphate + H(+). The enzyme catalyses (24S)-hydroxycholesterol 24-sulfate + 3'-phosphoadenylyl sulfate = (24S)-hydroxycholesterol 3,24-disulfate + adenosine 3',5'-bisphosphate + H(+). It carries out the reaction 3beta-hydroxyandrost-5-en-17-one + 3'-phosphoadenylyl sulfate = dehydroepiandrosterone 3-sulfate + adenosine 3',5'-bisphosphate + H(+). It catalyses the reaction pregnenolone + 3'-phosphoadenylyl sulfate = pregnenolone sulfate + adenosine 3',5'-bisphosphate + H(+). The catalysed reaction is androsterone + 3'-phosphoadenylyl sulfate = androsterone 3alpha-sulfate + adenosine 3',5'-bisphosphate + H(+). The enzyme catalyses taurolithocholate + 3'-phosphoadenylyl sulfate = taurolithocholate 3-sulfate + adenosine 3',5'-bisphosphate + H(+). It carries out the reaction lithocholate + 3'-phosphoadenylyl sulfate = lithocholate sulfate + adenosine 3',5'-bisphosphate + H(+). Its activity is regulated as follows. Subject to substrate inhibition. Alternate orientations for binding of steroid substrates to SULT2A1 may play a role in substrate inhibition. Sulfotransferase that utilizes 3'-phospho-5'-adenylyl sulfate (PAPS) as sulfonate donor to catalyze the sulfonation of steroids and bile acids in the liver and adrenal glands. Mediates the sulfation of a wide range of steroids and sterols, including pregnenolone, androsterone, DHEA, bile acids, cholesterol and as well many xenobiotics that contain alcohol and phenol functional groups. Sulfonation increases the water solubility of most compounds, and therefore their renal excretion, but it can also result in bioactivation to form active metabolites. Plays an important role in maintening steroid and lipid homeostasis. Plays a key role in bile acid metabolism. In addition, catalyzes the metabolic activation of potent carcinogenic polycyclic arylmethanols. The polypeptide is Sulfotransferase 2A1 (SULT2A1) (Homo sapiens (Human)).